The chain runs to 273 residues: Ethanolamine ammonia-lyase small subunit (273 aa).

3 residues coordinate adenosylcob(III)alamin: valine 164, glutamate 185, and cysteine 214.

Belongs to the EutC family. In terms of assembly, the basic unit is a heterodimer which dimerizes to form tetramers. The heterotetramers trimerize; 6 large subunits form a core ring with 6 small subunits projecting outwards. It depends on adenosylcob(III)alamin as a cofactor.

Its subcellular location is the bacterial microcompartment. The catalysed reaction is ethanolamine = acetaldehyde + NH4(+). Its pathway is amine and polyamine degradation; ethanolamine degradation. Catalyzes the deamination of various vicinal amino-alcohols to oxo compounds. Allows this organism to utilize ethanolamine as the sole source of nitrogen and carbon in the presence of external vitamin B12. In Pseudomonas aeruginosa (strain LESB58), this protein is Ethanolamine ammonia-lyase small subunit.